A 602-amino-acid chain; its full sequence is Aspartate--tRNA(Asp/Asn) ligase (602 aa).

Glutamate 176 lines the L-aspartate pocket. The interval 200–203 (QQFK) is aspartate. L-aspartate-binding residues include arginine 222 and histidine 452. ATP is bound at residue 222-224 (RDE). ATP is bound at residue glutamate 490. Residue arginine 497 participates in L-aspartate binding. ATP is bound at residue 542 to 545 (GIDR).

This sequence belongs to the class-II aminoacyl-tRNA synthetase family. Type 1 subfamily. As to quaternary structure, homodimer.

The protein resides in the cytoplasm. It catalyses the reaction tRNA(Asx) + L-aspartate + ATP = L-aspartyl-tRNA(Asx) + AMP + diphosphate. Aspartyl-tRNA synthetase with relaxed tRNA specificity since it is able to aspartylate not only its cognate tRNA(Asp) but also tRNA(Asn). Reaction proceeds in two steps: L-aspartate is first activated by ATP to form Asp-AMP and then transferred to the acceptor end of tRNA(Asp/Asn). This Rickettsia canadensis (strain McKiel) protein is Aspartate--tRNA(Asp/Asn) ligase.